A 66-amino-acid chain; its full sequence is Large ribosomal subunit protein bL33c (66 aa).

It belongs to the bacterial ribosomal protein bL33 family.

It is found in the plastid. It localises to the chloroplast. The sequence is that of Large ribosomal subunit protein bL33c from Lepidium virginicum (Virginia pepperweed).